The following is a 133-amino-acid chain: Small ribosomal subunit protein uS8 (133 aa).

Belongs to the universal ribosomal protein uS8 family. In terms of assembly, part of the 30S ribosomal subunit. Contacts proteins S5 and S12.

Its function is as follows. One of the primary rRNA binding proteins, it binds directly to 16S rRNA central domain where it helps coordinate assembly of the platform of the 30S subunit. In Chlamydia caviae (strain ATCC VR-813 / DSM 19441 / 03DC25 / GPIC) (Chlamydophila caviae), this protein is Small ribosomal subunit protein uS8.